The chain runs to 238 residues: Cysteine-rich venom protein 1 (238 aa).

Residues 1 to 19 (MIAFIVLLSLAAVLQQSSG) form the signal peptide. Residues 38–164 (VDKHNALRRS…STKYLYVCQY (127 aa)) enclose the SCP domain. 8 disulfides stabilise this stretch: cysteine 75–cysteine 153, cysteine 92–cysteine 165, cysteine 148–cysteine 162, cysteine 184–cysteine 191, cysteine 187–cysteine 196, cysteine 200–cysteine 233, cysteine 209–cysteine 227, and cysteine 218–cysteine 231. One can recognise a ShKT domain in the interval 200–233 (CEYEDTFSNCKALAKKTKCKTEWIKSKCPATCFC).

Belongs to the CRISP family. Expressed by the venom gland.

It localises to the secreted. In terms of biological role, blocks contraction of smooth muscle elicited by high potassium-induced depolarization, but does not block caffeine-stimulated contraction. May target voltage-gated calcium channels on smooth muscle. The polypeptide is Cysteine-rich venom protein 1 (Hydrophis hardwickii (Hardwick's spine-bellied seasnake)).